A 143-amino-acid polypeptide reads, in one-letter code: Pre-mRNA-splicing factor U5-Cwc21 (143 aa).

One can recognise a CWF21 domain in the interval 27–70; the sequence is EHHRSLRAIKLKVLLYREEREAAGVPPDVISRECATLHGSLLRN.

It belongs to the CWC21 family. In terms of assembly, associates with the NTC complex (or PRP19-associated complex). The NTC complex associates with the spliceosome after the release of the U1 and U4 snRNAs and forms the CWC spliceosome subcomplex reminiscent of a late-stage spliceosome. Associates specifically with U5-containing snRNPs.

The protein resides in the cytoplasm. It localises to the nucleus. Its function is as follows. Essential protein involved in pre-mRNA cis- and trans-splicing. May function at or prior to the first catalytic step of splicing at the catalytic center of the spliceosome. May do so by stabilizing the catalytic center or the position of the RNA substrate. In Trypanosoma brucei brucei (strain 927/4 GUTat10.1), this protein is Pre-mRNA-splicing factor U5-Cwc21.